Reading from the N-terminus, the 465-residue chain is MTEVLLLPGTKSENSKPPHIVVFPFPAQGHLLPLLDLTHQLCLRGFNVSVIVTPGNLTYLSPLLSAHPSSVTSVVFPFPPHPSLSPGVENVKDVGNSGNLPIMASLRQLREPIINWFQSHPNPPIALISDFFLGWTHDLCNQIGIPRFAFFSISFFLVSVLQFCFENIDLIKSTDPIHLLDLPRAPIFKEEHLPSIVRRSLQTPSPDLESIKDFSMNLLSYGSVFNSSEILEDDYLQYVKQRMGHDRVYVIGPLCSIGSGLKSNSGSVDPSLLSWLDGSPNGSVLYVCFGSQKALTKDQCDALALGLEKSMTRFVWVVKKDPIPDGFEDRVSGRGLVVRGWVSQLAVLRHVAVGGFLSHCGWNSVLEGITSGAVILGWPMEADQFVNARLLVEHLGVAVRVCEGGETVPDSDELGRVIAETMGEGGREVAARAEEIRRKTEAAVTEANGSSVENVQRLVKEFEKV.

Residues Ser-291, 342–344 (VSQ), 359–367 (HCGWNSVLE), and 381–384 (EADQ) contribute to the UDP-alpha-D-glucose site.

This sequence belongs to the UDP-glycosyltransferase family.

Functionally, glucosyltransferase that glucosylates benzoates and benzoate derivatives in vitro. The chain is UDP-glycosyltransferase 89A2 (UGT89A2) from Arabidopsis thaliana (Mouse-ear cress).